The primary structure comprises 273 residues: Glutamate racemase (273 aa).

Substrate-binding positions include 9 to 10 (DS) and 41 to 42 (YG). Cys-73 functions as the Proton donor/acceptor in the catalytic mechanism. Residue 74-75 (NT) coordinates substrate. Catalysis depends on Cys-183, which acts as the Proton donor/acceptor. 184-185 (TH) is a substrate binding site.

It belongs to the aspartate/glutamate racemases family.

It carries out the reaction L-glutamate = D-glutamate. The protein operates within cell wall biogenesis; peptidoglycan biosynthesis. Its function is as follows. Provides the (R)-glutamate required for cell wall biosynthesis. This is Glutamate racemase from Shewanella oneidensis (strain ATCC 700550 / JCM 31522 / CIP 106686 / LMG 19005 / NCIMB 14063 / MR-1).